The chain runs to 68 residues: Conotoxin Lt5.2 (68 aa).

The N-terminal stretch at 1–19 is a signal peptide; it reads MLCLPVFIILLLLASPAAP. Residues 20-54 constitute a propeptide that is removed on maturation; the sequence is KSLETRIQNDLIRAGLTDADLKTEKGFLSGLLNVA.

Belongs to the conotoxin T superfamily. Post-translationally, contains 2 disulfide bonds that can be either 'C1-C3, C2-C4' or 'C1-C4, C2-C3', since these disulfide connectivities have been observed for conotoxins with cysteine framework V (for examples, see AC P0DQQ7 and AC P81755). Expressed by the venom duct.

The protein resides in the secreted. In Conus litteratus (Lettered cone), this protein is Conotoxin Lt5.2.